Consider the following 215-residue polypeptide: Cytochrome b6 (215 aa).

The helical transmembrane segment at 32-52 (IFYCLGGVTLVCFIIQFATGF) threads the bilayer. A heme c-binding site is contributed by Cys35. 2 residues coordinate heme b: His86 and His100. The next 3 membrane-spanning stretches (helical) occupy residues 90–110 (ASMM…TGGF), 116–136 (LTWI…VTGY), and 186–206 (LHTF…FLMI). Heme b-binding residues include His187 and His202.

This sequence belongs to the cytochrome b family. PetB subfamily. The 4 large subunits of the cytochrome b6-f complex are cytochrome b6, subunit IV (17 kDa polypeptide, PetD), cytochrome f and the Rieske protein, while the 4 small subunits are PetG, PetL, PetM and PetN. The complex functions as a dimer. The cofactor is heme b. Requires heme c as cofactor.

It localises to the cellular thylakoid membrane. Component of the cytochrome b6-f complex, which mediates electron transfer between photosystem II (PSII) and photosystem I (PSI), cyclic electron flow around PSI, and state transitions. This is Cytochrome b6 from Acaryochloris marina (strain MBIC 11017).